The primary structure comprises 248 residues: 1-(5-phosphoribosyl)-5-[(5-phosphoribosylamino)methylideneamino] imidazole-4-carboxamide isomerase (248 aa).

Catalysis depends on aspartate 8, which acts as the Proton acceptor. Aspartate 131 acts as the Proton donor in catalysis.

The protein belongs to the HisA/HisF family.

The protein resides in the cytoplasm. The enzyme catalyses 1-(5-phospho-beta-D-ribosyl)-5-[(5-phospho-beta-D-ribosylamino)methylideneamino]imidazole-4-carboxamide = 5-[(5-phospho-1-deoxy-D-ribulos-1-ylimino)methylamino]-1-(5-phospho-beta-D-ribosyl)imidazole-4-carboxamide. It functions in the pathway amino-acid biosynthesis; L-histidine biosynthesis; L-histidine from 5-phospho-alpha-D-ribose 1-diphosphate: step 4/9. This is 1-(5-phosphoribosyl)-5-[(5-phosphoribosylamino)methylideneamino] imidazole-4-carboxamide isomerase from Cupriavidus necator (strain ATCC 17699 / DSM 428 / KCTC 22496 / NCIMB 10442 / H16 / Stanier 337) (Ralstonia eutropha).